Reading from the N-terminus, the 78-residue chain is Sec-independent protein translocase protein TatA (78 aa).

Residues 1-21 form a helical membrane-spanning segment; it reads MGGISIWQLLIIAVIVVLLFG. Residues 47–59 are compositionally biased toward basic and acidic residues; sequence ESEKKDADFEPKS. The tract at residues 47–78 is disordered; the sequence is ESEKKDADFEPKSLEQQSKQAATESKKDKEQA. The span at 60–69 shows a compositional bias: polar residues; that stretch reads LEQQSKQAAT.

Belongs to the TatA/E family. The Tat system comprises two distinct complexes: a TatABC complex, containing multiple copies of TatA, TatB and TatC subunits, and a separate TatA complex, containing only TatA subunits. Substrates initially bind to the TatABC complex, which probably triggers association of the separate TatA complex to form the active translocon.

It localises to the cell inner membrane. Part of the twin-arginine translocation (Tat) system that transports large folded proteins containing a characteristic twin-arginine motif in their signal peptide across membranes. TatA could form the protein-conducting channel of the Tat system. This is Sec-independent protein translocase protein TatA from Vibrio vulnificus (strain CMCP6).